A 131-amino-acid polypeptide reads, in one-letter code: Small ribosomal subunit protein uS12 (131 aa).

Position 89 is a 3-methylthioaspartic acid (Asp89).

Belongs to the universal ribosomal protein uS12 family. As to quaternary structure, part of the 30S ribosomal subunit. Contacts proteins S8 and S17. May interact with IF1 in the 30S initiation complex.

Functionally, with S4 and S5 plays an important role in translational accuracy. In terms of biological role, interacts with and stabilizes bases of the 16S rRNA that are involved in tRNA selection in the A site and with the mRNA backbone. Located at the interface of the 30S and 50S subunits, it traverses the body of the 30S subunit contacting proteins on the other side and probably holding the rRNA structure together. The combined cluster of proteins S8, S12 and S17 appears to hold together the shoulder and platform of the 30S subunit. In Campylobacter concisus (strain 13826), this protein is Small ribosomal subunit protein uS12.